The following is a 275-amino-acid chain: Hydroxyethylthiazole kinase (275 aa).

Substrate is bound at residue Met57. Arg132 and Ser178 together coordinate ATP. Gly205 lines the substrate pocket.

The protein belongs to the Thz kinase family. Mg(2+) is required as a cofactor.

The catalysed reaction is 5-(2-hydroxyethyl)-4-methylthiazole + ATP = 4-methyl-5-(2-phosphooxyethyl)-thiazole + ADP + H(+). It functions in the pathway cofactor biosynthesis; thiamine diphosphate biosynthesis; 4-methyl-5-(2-phosphoethyl)-thiazole from 5-(2-hydroxyethyl)-4-methylthiazole: step 1/1. Its function is as follows. Catalyzes the phosphorylation of the hydroxyl group of 4-methyl-5-beta-hydroxyethylthiazole (THZ). The chain is Hydroxyethylthiazole kinase from Clavibacter sepedonicus (Clavibacter michiganensis subsp. sepedonicus).